The sequence spans 325 residues: Helicase VP6-A (325 aa).

Disordered regions lie at residues M1–R127 and E174–R230. 4 stretches are compositionally biased toward basic and acidic residues: residues V8–Q18, E32–E54, G61–I79, and P92–G105. K106 provides a ligand contact to ATP. The span at K106 to G122 shows a compositional bias: gly residues. Basic and acidic residues predominate over residues G175–A229.

Belongs to the orbivirus VP6 family. As to quaternary structure, homohexamer.

It is found in the virion. The enzyme catalyses ATP + H2O = ADP + phosphate + H(+). In terms of biological role, ATP dependent RNA helicase essential for RNA packaging and viral transcription. Possesses ss- and dsRNA-binding capacity. This Bluetongue virus 13 (isolate USA) (BTV 13) protein is Helicase VP6-A (Segment-9).